The chain runs to 534 residues: Multicopper oxidase LPR1 homolog 3 (534 aa).

Positions 84 and 86 each coordinate Cu cation. The N-linked (GlcNAc...) asparagine glycan is linked to Asn109. Cu cation-binding residues include His133 and His135. Residues 219–291 (PFQAVQRRRY…VDFSLVVNPN (73 aa)) enclose the Plastocyanin-like domain. Residues Asn234, Asn291, Asn312, Asn323, Asn341, and Asn372 are each glycosylated (N-linked (GlcNAc...) asparagine). Residues His419, His422, and His424 each contribute to the Cu cation site. N-linked (GlcNAc...) asparagine glycosylation is present at Asn450. Cu cation is bound by residues His515, Cys516, His517, His521, and Met526.

The protein belongs to the multicopper oxidase family. Cu cation is required as a cofactor. As to expression, expressed in roots and basal stems.

Its subcellular location is the endoplasmic reticulum membrane. Functionally, multicopper oxidase that may play a role in the maintenance of inorganic phosphate homeostasis. In Oryza sativa subsp. japonica (Rice), this protein is Multicopper oxidase LPR1 homolog 3.